The following is a 384-amino-acid chain: S-adenosylmethionine synthase (384 aa).

H15 serves as a coordination point for ATP. D17 is a Mg(2+) binding site. Position 43 (E43) interacts with K(+). The L-methionine site is built by E56 and Q99. The interval 99–109 is flexible loop; the sequence is QSPDINQGVDK. Residues 164–166, 230–231, D239, 245–246, A262, and K266 each bind ATP; these read DAK, RF, and RK. D239 is an L-methionine binding site. An L-methionine-binding site is contributed by K270.

This sequence belongs to the AdoMet synthase family. Homotetramer; dimer of dimers. Mg(2+) serves as cofactor. K(+) is required as a cofactor.

It localises to the cytoplasm. The catalysed reaction is L-methionine + ATP + H2O = S-adenosyl-L-methionine + phosphate + diphosphate. Its pathway is amino-acid biosynthesis; S-adenosyl-L-methionine biosynthesis; S-adenosyl-L-methionine from L-methionine: step 1/1. Catalyzes the formation of S-adenosylmethionine (AdoMet) from methionine and ATP. The overall synthetic reaction is composed of two sequential steps, AdoMet formation and the subsequent tripolyphosphate hydrolysis which occurs prior to release of AdoMet from the enzyme. This chain is S-adenosylmethionine synthase, found in Aliivibrio fischeri (strain ATCC 700601 / ES114) (Vibrio fischeri).